A 356-amino-acid chain; its full sequence is Surface presentation of antigens protein SpaS (356 aa).

5 consecutive transmembrane segments (helical) span residues 29-49 (LIIACLTLGGIAYLVSYGSFN), 72-92 (LAVFGIGLKYLIPFMLLCLVC), 132-152 (VKDTVKTLLYLSSFVVAAIIC), 179-199 (LLALVLTCLACALIVLLLDAI), and 261-281 (HITIGIYFKPELMPIPMISVY).

This sequence belongs to the type III secretion exporter family.

It localises to the cell inner membrane. Involved in a secretory pathway responsible for the surface presentation of determinants needed for the entry of Salmonella species into mammalian cells. The chain is Surface presentation of antigens protein SpaS (spaS) from Salmonella typhimurium (strain LT2 / SGSC1412 / ATCC 700720).